A 487-amino-acid polypeptide reads, in one-letter code: Dihydrofolate synthase/folylpolyglutamate synthase (487 aa).

A 7,8-dihydropteroate-binding site is contributed by 44 to 46; the sequence is DPS. 74–77 contributes to the ATP binding site; it reads GKTS. Mg(2+) contacts are provided by Thr76 and Ser98. Position 150–153 (150–153) interacts with 7,8-dihydropteroate; the sequence is SKFE. Glu174 is a Mg(2+) binding site. Position 181–183 (181–183) interacts with 7,8-dihydropteroate; sequence WDA. Mg(2+)-binding residues include His201 and Asp203. Residues Asn301, Arg338, and 351 to 354 each bind ATP; that span reads DAAH. Asp384 is a binding site for Mg(2+).

The protein belongs to the folylpolyglutamate synthase family. In terms of assembly, monomer. The cofactor is Mg(2+).

It catalyses the reaction 7,8-dihydropteroate + L-glutamate + ATP = 7,8-dihydrofolate + ADP + phosphate + H(+). The catalysed reaction is (6S)-5,6,7,8-tetrahydrofolyl-(gamma-L-Glu)(n) + L-glutamate + ATP = (6S)-5,6,7,8-tetrahydrofolyl-(gamma-L-Glu)(n+1) + ADP + phosphate + H(+). Its pathway is cofactor biosynthesis; tetrahydrofolate biosynthesis; 7,8-dihydrofolate from 2-amino-4-hydroxy-6-hydroxymethyl-7,8-dihydropteridine diphosphate and 4-aminobenzoate: step 2/2. It participates in cofactor biosynthesis; tetrahydrofolylpolyglutamate biosynthesis. In terms of biological role, catalyzes the addition of a glutamate residue to dihydropteroate (7,8-dihydropteroate or H2Pte) to form dihydrofolate (7,8-dihydrofolate monoglutamate or H2Pte-Glu). Also catalyzes successive additions of L-glutamate to tetrahydrofolate, leading to folylpolyglutamate derivatives. Functionally, is involved in the bioactivation of the antituberculous drug para-aminosalicylic acid (PAS). Is able to use hydroxy-dihydropteroate (H2PtePAS) as substrate, which is the product formed by the action of DHPS (FolP1) on PAS, leading to hydroxy-dihydrofolate (H2PtePAS-Glu). This compound inhibits dihydrofolate reductase DHFR (DfrA), the next enzyme in the folate pathway, and thus disrupts the folate-dependent metabolic pathways. The polypeptide is Dihydrofolate synthase/folylpolyglutamate synthase (Mycobacterium tuberculosis (strain ATCC 25618 / H37Rv)).